A 129-amino-acid polypeptide reads, in one-letter code: Transcription antitermination protein NusB (129 aa).

Belongs to the NusB family.

In terms of biological role, involved in transcription antitermination. Required for transcription of ribosomal RNA (rRNA) genes. Binds specifically to the boxA antiterminator sequence of the ribosomal RNA (rrn) operons. This is Transcription antitermination protein NusB from Staphylococcus epidermidis (strain ATCC 35984 / DSM 28319 / BCRC 17069 / CCUG 31568 / BM 3577 / RP62A).